A 305-amino-acid chain; its full sequence is Glycine--tRNA ligase alpha subunit (305 aa).

The protein belongs to the class-II aminoacyl-tRNA synthetase family. As to quaternary structure, tetramer of two alpha and two beta subunits.

It is found in the cytoplasm. The enzyme catalyses tRNA(Gly) + glycine + ATP = glycyl-tRNA(Gly) + AMP + diphosphate. The chain is Glycine--tRNA ligase alpha subunit from Streptococcus thermophilus (strain CNRZ 1066).